We begin with the raw amino-acid sequence, 336 residues long: MKGKFLKVSSLFVATLTTATLVSSPAANALSSKAMDNHPQQTQSSKQQTPKIQKGGNLKPLEQREHANVILPNNDRHQITDTTNGHYAPVTYIQVEAPTGTFIASGVVVGKDTLLTNKHVVDATHGDPHALKAFPSAINQDNYPNGGFTAEQITKYSGEGDLAIVKFSPNEQNKHIGEVVKPATMSNNAETQVNQNITVTGYPGDKPVATMWESKGKITYLKGEAMQYDLSTTGGNSGSPVFNEKNEVIGIHWGGVPNEFNGAVFINENVRNFLKQNIEDIHFANDDQPNNPDNPDNPNNPDNPNNPDEPNNPDNPNNPDNPDNGDTNNSDNPDAA.

Positions 1–29 (MKGKFLKVSSLFVATLTTATLVSSPAANA) are cleaved as a signal peptide. A propeptide spanning residues 30-68 (LSSKAMDNHPQQTQSSKQQTPKIQKGGNLKPLEQREHAN) is cleaved from the precursor. The disordered stretch occupies residues 34-61 (AMDNHPQQTQSSKQQTPKIQKGGNLKPL). The segment covering 39-51 (PQQTQSSKQQTPK) has biased composition (low complexity). Residues His-119, Asp-161, and Ser-237 each act as charge relay system in the active site. Positions 283 to 336 (FANDDQPNNPDNPDNPNNPDNPNNPDEPNNPDNPNNPDNPDNGDTNNSDNPDAA) are disordered. Residues 286 to 336 (DDQPNNPDNPDNPNNPDNPNNPDEPNNPDNPNNPDNPDNGDTNNSDNPDAA) show a composition bias toward low complexity. 11 consecutive repeat copies span residues 289–291 (PNN), 292–294 (PDN), 295–297 (PDN), 298–300 (PNN), 301–303 (PDN), 304–306 (PNN), 310–312 (PNN), 313–315 (PDN), 316–318 (PNN), 319–321 (PDN), and 322–324 (PDN). The segment at 289 to 324 (PNNPDNPDNPNNPDNPNNPDEPNNPDNPNNPDNPDN) is 11 X 3 AA repeats of P-[DN]-N.

The protein belongs to the peptidase S1B family. Proteolytically cleaved by aureolysin (aur). This cleavage leads to the activation of SspA.

The protein resides in the secreted. The enzyme catalyses Preferential cleavage: Glu-|-Xaa, Asp-|-Xaa.. Preferentially cleaves peptide bonds on the carboxyl-terminal side of aspartate and glutamate. Along with other extracellular proteases it is involved in colonization and infection of human tissues. Required for proteolytic maturation of thiol protease SspB and inactivation of SspC, an inhibitor of SspB. It is the most important protease for degradation of fibronectin-binding protein (FnBP) and surface protein A, which are involved in adherence to host cells. May also protect bacteria against host defense mechanism by cleaving the immunoglobulin classes IgG, IgA and IgM. May be involved in the stability of secreted lipases. The protein is Glutamyl endopeptidase (sspA) of Staphylococcus aureus (strain COL).